Here is a 399-residue protein sequence, read N- to C-terminus: Elongation factor Tu (399 aa).

One can recognise a tr-type G domain in the interval 10–204 (KPHVNIGTIG…AVDASIPEPE (195 aa)). The interval 19–26 (GHVDHGKT) is G1. 19–26 (GHVDHGKT) serves as a coordination point for GTP. T26 contacts Mg(2+). The tract at residues 60-64 (GITIN) is G2. Residues 81-84 (DCPG) are G3. Residues 81–85 (DCPGH) and 136–139 (NKCD) each bind GTP. Residues 136–139 (NKCD) are G4. The segment at 174–176 (SGL) is G5.

Belongs to the TRAFAC class translation factor GTPase superfamily. Classic translation factor GTPase family. EF-Tu/EF-1A subfamily. As to quaternary structure, monomer.

The protein resides in the cytoplasm. It carries out the reaction GTP + H2O = GDP + phosphate + H(+). GTP hydrolase that promotes the GTP-dependent binding of aminoacyl-tRNA to the A-site of ribosomes during protein biosynthesis. This chain is Elongation factor Tu, found in Prochlorococcus marinus (strain MIT 9312).